The sequence spans 312 residues: MQISKFFKFVFISVSLCGSLLFPQMANAYPVFAQQAYDNPREATGRIVCANCHLAQKPTEVEVPQAVLPDTVFEAVVNIPYDTKVQQVTASGTPGPLNVGAVVILPEGFKLAPKGRMSDELKAKTKGVFVQPYSKTRPNILVVGPILGEKNREVTFPILAPDPAQDKSVHYLNYPIYVGANRGRGQVYPSGEKSNNNTFTSTAAGKVTAIEAGDKGTTRVTIQTAAGEAKEQTVPAGLKVSVKTGDVIQADQALSYNPNVGGFGQAETEVILQSPNRVKGMIAFFFTVTVAQILLVLKKKQFEKVQAAEMNF.

The N-terminal stretch at 1–28 (MQISKFFKFVFISVSLCGSLLFPQMANA) is a signal peptide. The heme site is built by Y29, C49, C52, and H53. A helical transmembrane segment spans residues 278–298 (VKGMIAFFFTVTVAQILLVLK).

Belongs to the cytochrome f family. As to quaternary structure, the 4 large subunits of the cytochrome b6-f complex are cytochrome b6, subunit IV (17 kDa polypeptide, petD), cytochrome f and the Rieske protein, while the 4 small subunits are PetG, PetL, PetM and PetN. The complex functions as a dimer. The cofactor is heme.

The protein localises to the plastid. Its subcellular location is the chloroplast thylakoid membrane. In terms of biological role, component of the cytochrome b6-f complex, which mediates electron transfer between photosystem II (PSII) and photosystem I (PSI), cyclic electron flow around PSI, and state transitions. The sequence is that of Cytochrome f from Emiliania huxleyi (Coccolithophore).